Reading from the N-terminus, the 195-residue chain is Xanthine phosphoribosyltransferase (195 aa).

Residues Leu-20 and Asn-27 each contribute to the xanthine site. 128 to 132 (ANGQA) lines the 5-phospho-alpha-D-ribose 1-diphosphate pocket. Lys-156 is a binding site for xanthine.

Belongs to the purine/pyrimidine phosphoribosyltransferase family. Xpt subfamily. In terms of assembly, homodimer.

Its subcellular location is the cytoplasm. It carries out the reaction XMP + diphosphate = xanthine + 5-phospho-alpha-D-ribose 1-diphosphate. Its pathway is purine metabolism; XMP biosynthesis via salvage pathway; XMP from xanthine: step 1/1. Its function is as follows. Converts the preformed base xanthine, a product of nucleic acid breakdown, to xanthosine 5'-monophosphate (XMP), so it can be reused for RNA or DNA synthesis. This chain is Xanthine phosphoribosyltransferase, found in Lactiplantibacillus plantarum (strain ATCC BAA-793 / NCIMB 8826 / WCFS1) (Lactobacillus plantarum).